The primary structure comprises 278 residues: Toxin coregulated pilus biosynthesis protein D (278 aa).

The helical transmembrane segment at 30-50 (LLVAIIFLVLSILGGGAYLYY) threads the bilayer.

It localises to the cell membrane. Functionally, involved in TCP pilus biogenesis. This chain is Toxin coregulated pilus biosynthesis protein D (tcpD), found in Vibrio cholerae serotype O1 (strain ATCC 39315 / El Tor Inaba N16961).